A 205-amino-acid polypeptide reads, in one-letter code: Small ribosomal subunit protein uS4 (205 aa).

The tract at residues 20–44 is disordered; the sequence is WGRPKSPVNRREYGPGQHGQRRKGK. In terms of domain architecture, S4 RNA-binding spans 94 to 154; that stretch reads SRLDAIVYRS…ERSKQLLLVL (61 aa).

This sequence belongs to the universal ribosomal protein uS4 family. Part of the 30S ribosomal subunit. Contacts protein S5. The interaction surface between S4 and S5 is involved in control of translational fidelity.

Its function is as follows. One of the primary rRNA binding proteins, it binds directly to 16S rRNA where it nucleates assembly of the body of the 30S subunit. In terms of biological role, with S5 and S12 plays an important role in translational accuracy. This is Small ribosomal subunit protein uS4 from Bartonella bacilliformis (strain ATCC 35685 / KC583 / Herrer 020/F12,63).